The chain runs to 364 residues: Aminomethyltransferase (364 aa).

This sequence belongs to the GcvT family. The glycine cleavage system is composed of four proteins: P, T, L and H.

The catalysed reaction is N(6)-[(R)-S(8)-aminomethyldihydrolipoyl]-L-lysyl-[protein] + (6S)-5,6,7,8-tetrahydrofolate = N(6)-[(R)-dihydrolipoyl]-L-lysyl-[protein] + (6R)-5,10-methylene-5,6,7,8-tetrahydrofolate + NH4(+). Its function is as follows. The glycine cleavage system catalyzes the degradation of glycine. The sequence is that of Aminomethyltransferase from Salmonella dublin (strain CT_02021853).